A 211-amino-acid chain; its full sequence is Ribonuclease MRP protein subunit rmp1 (211 aa).

Residues 73–93 (PALGLVLLGILARVWFVMGGI) form a helical membrane-spanning segment. A Phosphoserine modification is found at Ser156. A disordered region spans residues 178 to 211 (SQGTKRKSKNSNSTVKKKKKRARKGRDEIDDIFG). Over residues 181–201 (TKRKSKNSNSTVKKKKKRARK) the composition is skewed to basic residues.

In terms of assembly, component of RNase MRP complex which consists of an RNA moiety and at least 10 protein subunits.

The protein resides in the membrane. It is found in the nucleus. The protein localises to the nucleolus. Functionally, functions as part of ribonuclease MRP (RNase MRP), which is involved in rRNA processing in mitochondria. The sequence is that of Ribonuclease MRP protein subunit rmp1 from Schizosaccharomyces pombe (strain 972 / ATCC 24843) (Fission yeast).